We begin with the raw amino-acid sequence, 274 residues long: Large ribosomal subunit protein uL2 (274 aa).

The tract at residues V223–K274 is disordered.

It belongs to the universal ribosomal protein uL2 family. As to quaternary structure, part of the 50S ribosomal subunit. Forms a bridge to the 30S subunit in the 70S ribosome.

In terms of biological role, one of the primary rRNA binding proteins. Required for association of the 30S and 50S subunits to form the 70S ribosome, for tRNA binding and peptide bond formation. It has been suggested to have peptidyltransferase activity; this is somewhat controversial. Makes several contacts with the 16S rRNA in the 70S ribosome. In Shewanella baltica (strain OS223), this protein is Large ribosomal subunit protein uL2.